Reading from the N-terminus, the 265-residue chain is Transcriptional activator TAF-1 (265 aa).

Disordered regions lie at residues 1 to 133 (AHGG…SEKA) and 167 to 218 (THLK…KQAE). The segment covering 35-46 (ASLSLDASAKSS) has biased composition (low complexity). Basic and acidic residues-rich tracts occupy residues 103-115 (RETT…DSKS) and 191-209 (NERE…ESAR). Residues 194–257 (ELKREKRKQS…EKLKLENAAL (64 aa)) form the bZIP domain. The segment at 196-215 (KREKRKQSNRESARRSRLRK) is basic motif. Positions 222 to 257 (LAIRVQSLTAENMTLKSEINKLMENSEKLKLENAAL) are leucine-zipper.

This sequence belongs to the bZIP family. In terms of tissue distribution, present mainly in roots. Barely detectable in stems and leaves.

It is found in the nucleus. Trans-activator of a beta-glucuronidase (GUS) reporter gene. Binds to a G-box-related element, (5'-GCAACGTGGC-3'). Also binds to the HEX-motif of wheat histone H3 promoter. This is Transcriptional activator TAF-1 (TAF1) from Nicotiana tabacum (Common tobacco).